Reading from the N-terminus, the 115-residue chain is Large ribosomal subunit protein bL19 (115 aa).

This sequence belongs to the bacterial ribosomal protein bL19 family.

This protein is located at the 30S-50S ribosomal subunit interface and may play a role in the structure and function of the aminoacyl-tRNA binding site. The sequence is that of Large ribosomal subunit protein bL19 from Clostridium perfringens (strain ATCC 13124 / DSM 756 / JCM 1290 / NCIMB 6125 / NCTC 8237 / Type A).